Consider the following 409-residue polypeptide: Lipoyl synthase, mitochondrial (409 aa).

Residues 21–41 (QQQVPPSEEPRNESGAANPPL) are disordered. Residues cysteine 125, cysteine 130, cysteine 136, cysteine 159, cysteine 163, cysteine 166, and serine 375 each coordinate [4Fe-4S] cluster. The region spanning 142-364 (EEGDGTATAT…EKEALDMGFL (223 aa)) is the Radical SAM core domain.

Belongs to the radical SAM superfamily. Lipoyl synthase family. [4Fe-4S] cluster is required as a cofactor.

It localises to the mitochondrion. It carries out the reaction [[Fe-S] cluster scaffold protein carrying a second [4Fe-4S](2+) cluster] + N(6)-octanoyl-L-lysyl-[protein] + 2 oxidized [2Fe-2S]-[ferredoxin] + 2 S-adenosyl-L-methionine + 4 H(+) = [[Fe-S] cluster scaffold protein] + N(6)-[(R)-dihydrolipoyl]-L-lysyl-[protein] + 4 Fe(3+) + 2 hydrogen sulfide + 2 5'-deoxyadenosine + 2 L-methionine + 2 reduced [2Fe-2S]-[ferredoxin]. It functions in the pathway protein modification; protein lipoylation via endogenous pathway; protein N(6)-(lipoyl)lysine from octanoyl-[acyl-carrier-protein]: step 2/2. In terms of biological role, catalyzes the radical-mediated insertion of two sulfur atoms into the C-6 and C-8 positions of the octanoyl moiety bound to the lipoyl domains of lipoate-dependent enzymes, thereby converting the octanoylated domains into lipoylated derivatives. This chain is Lipoyl synthase, mitochondrial, found in Trypanosoma brucei gambiense (strain MHOM/CI/86/DAL972).